A 226-amino-acid polypeptide reads, in one-letter code: MAQRTAIALLSGGLDSATAAALAQEAGDRVIGLSFDYGQRHRRELKAAAKVAAHLNLAEHHQVDVNLGAWGGSALTDPNQTVPTSGVEEGVIPVTYVPGRNTVFIAIGLSLAEARGAERLVLGVNAVDYSGYPDCRPDYLDAFQTLATLSSKAGREGHGPQLWAPLVQWSKTKIVDEALRLGVPIGETWSCYSGGSRPCGVCDSCRIRDSALREAGRPDLCSNAEG.

Residue 10–20 participates in ATP binding; the sequence is LSGGLDSATAA. Positions 191, 199, 202, and 205 each coordinate Zn(2+).

This sequence belongs to the QueC family. It depends on Zn(2+) as a cofactor.

It catalyses the reaction 7-carboxy-7-deazaguanine + NH4(+) + ATP = 7-cyano-7-deazaguanine + ADP + phosphate + H2O + H(+). It participates in purine metabolism; 7-cyano-7-deazaguanine biosynthesis. Catalyzes the ATP-dependent conversion of 7-carboxy-7-deazaguanine (CDG) to 7-cyano-7-deazaguanine (preQ(0)). The chain is 7-cyano-7-deazaguanine synthase from Synechococcus sp. (strain CC9902).